A 224-amino-acid chain; its full sequence is Phosphoglycolate phosphatase (224 aa).

Asp8 serves as the catalytic Nucleophile. Mg(2+) contacts are provided by Asp8, Asp10, Gly11, and Gly43. Lys151 provides a ligand contact to substrate. Asp174, Ser175, and Asp178 together coordinate Mg(2+).

It belongs to the HAD-like hydrolase superfamily. Archaeal SPP-like hydrolase family. Homodimer. The cofactor is Mg(2+).

It catalyses the reaction 2-phosphoglycolate + H2O = glycolate + phosphate. With respect to regulation, inhibited by Ca(2+) ions and by high chloride ion concentration. By contrast, low chloride concentration (up to 50 mM) slightly activate the enzyme. In terms of biological role, catalyzes the dephosphorylation of 2-phosphoglycolate. Also has significant, but less efficient, pyrophosphatase activity, since it is able to catalyze the release of phosphate from inorganic pyrophosphate (PPi). The chain is Phosphoglycolate phosphatase from Thermoplasma acidophilum (strain ATCC 25905 / DSM 1728 / JCM 9062 / NBRC 15155 / AMRC-C165).